The following is a 442-amino-acid chain: Histidine--tRNA ligase (442 aa).

It belongs to the class-II aminoacyl-tRNA synthetase family. In terms of assembly, homodimer.

It localises to the cytoplasm. It catalyses the reaction tRNA(His) + L-histidine + ATP = L-histidyl-tRNA(His) + AMP + diphosphate + H(+). This chain is Histidine--tRNA ligase, found in Rhodopirellula baltica (strain DSM 10527 / NCIMB 13988 / SH1).